The primary structure comprises 73 residues: uncharacterized protein (73 aa).

Residues M1 to D22 form the signal peptide. A helical transmembrane segment spans residues T44–Y66.

It is found in the membrane. This is an uncharacterized protein from Bacillus subtilis (strain 168).